Reading from the N-terminus, the 202-residue chain is Keratin-associated protein 5-10 (202 aa).

7 repeat units span residues 48–51, 54–57, 144–147, 162–165, 172–175, 182–185, and 192–195. The interval 48 to 195 is 7 X 4 AA repeats of C-C-X-P; that stretch reads CCKPVCCCVP…CCCQSSCCVP (148 aa).

It belongs to the KRTAP type 5 family. As to quaternary structure, interacts with hair keratins. Expressed in hair root but not in skin. Expressed also in brain and skeletal muscle.

Its function is as follows. In the hair cortex, hair keratin intermediate filaments are embedded in an interfilamentous matrix, consisting of hair keratin-associated protein (KRTAP), which are essential for the formation of a rigid and resistant hair shaft through their extensive disulfide bond cross-linking with abundant cysteine residues of hair keratins. The matrix proteins include the high-sulfur and high-glycine-tyrosine keratins. The sequence is that of Keratin-associated protein 5-10 (KRTAP5-10) from Homo sapiens (Human).